The primary structure comprises 1383 residues: DNA-directed RNA polymerase subunit beta'' (1383 aa).

Zn(2+)-binding residues include Cys-220, Cys-289, Cys-296, and Cys-299.

Belongs to the RNA polymerase beta' chain family. RpoC2 subfamily. In terms of assembly, in plastids the minimal PEP RNA polymerase catalytic core is composed of four subunits: alpha, beta, beta', and beta''. When a (nuclear-encoded) sigma factor is associated with the core the holoenzyme is formed, which can initiate transcription. The cofactor is Zn(2+).

It is found in the plastid. The protein localises to the chloroplast. It carries out the reaction RNA(n) + a ribonucleoside 5'-triphosphate = RNA(n+1) + diphosphate. DNA-dependent RNA polymerase catalyzes the transcription of DNA into RNA using the four ribonucleoside triphosphates as substrates. The chain is DNA-directed RNA polymerase subunit beta'' from Oenothera parviflora (Small-flowered evening primrose).